The following is a 152-amino-acid chain: Large ribosomal subunit protein bL9 (152 aa).

The protein belongs to the bacterial ribosomal protein bL9 family.

Its function is as follows. Binds to the 23S rRNA. The protein is Large ribosomal subunit protein bL9 of Synechococcus sp. (strain CC9605).